A 741-amino-acid chain; its full sequence is Moderate conductance mechanosensitive channel YbiO (741 aa).

Residues 1 to 18 (MRWILFILFCLLGAPAHA) form the signal peptide. Residues 22 to 42 (PGVTTTTTTDSTTEPAPEPDI) are disordered. The span at 25–34 (TTTTTTDSTT) shows a compositional bias: low complexity. The next 11 membrane-spanning stretches (helical) occupy residues 143–163 (MLAV…LPLY), 185–205 (AMII…LFVG), 225–245 (LFLN…LIFC), 268–288 (LSWL…IISN), 294–314 (IGAL…LYLI), 343–363 (FALV…FFSL), 372–392 (FMMG…FVSG), 432–452 (ILTV…FDFW), 466–486 (ILIR…VLAS), 509–529 (LLTL…IMIV), and 533–553 (IGVN…AISF).

It belongs to the MscS (TC 1.A.23) family. In terms of assembly, homoheptamer.

It is found in the cell inner membrane. Its function is as follows. Mechanosensitive channel that protects cells against hypoosmotic stress when highly overexpressed. This chain is Moderate conductance mechanosensitive channel YbiO (ybiO), found in Escherichia coli (strain K12).